Here is a 524-residue protein sequence, read N- to C-terminus: 2-isopropylmalate synthase (524 aa).

The 263-residue stretch at 15–277 folds into the Pyruvate carboxyltransferase domain; the sequence is VVIFDTTMRD…ETKIDTTHIT (263 aa). The Mn(2+) site is built by Asp-24, His-212, His-214, and Asn-248. The regulatory domain stretch occupies residues 401–524; sequence RVQRLRVVAG…RPEAAIASGF (124 aa).

It belongs to the alpha-IPM synthase/homocitrate synthase family. LeuA type 1 subfamily. In terms of assembly, homodimer. Mn(2+) is required as a cofactor.

Its subcellular location is the cytoplasm. The catalysed reaction is 3-methyl-2-oxobutanoate + acetyl-CoA + H2O = (2S)-2-isopropylmalate + CoA + H(+). The protein operates within amino-acid biosynthesis; L-leucine biosynthesis; L-leucine from 3-methyl-2-oxobutanoate: step 1/4. Its function is as follows. Catalyzes the condensation of the acetyl group of acetyl-CoA with 3-methyl-2-oxobutanoate (2-ketoisovalerate) to form 3-carboxy-3-hydroxy-4-methylpentanoate (2-isopropylmalate). In Caulobacter sp. (strain K31), this protein is 2-isopropylmalate synthase.